Consider the following 51-residue polypeptide: Large ribosomal subunit protein eL39 (51 aa).

Belongs to the eukaryotic ribosomal protein eL39 family.

This chain is Large ribosomal subunit protein eL39, found in Pyrobaculum islandicum (strain DSM 4184 / JCM 9189 / GEO3).